The following is a 983-amino-acid chain: Serine/threonine-protein kinase N2 (983 aa).

One can recognise an REM-1 1 domain in the interval 33–109 (KLDFSDTMVQ…LQELNAHIVV (77 aa)). Lysine 77 is modified (N6-acetyllysine). Residues 107–135 (IVVSDPEDSTDCPRTPDTPNSDSRSSTSN) are disordered. The residue at position 110 (serine 110) is a Phosphoserine. Phosphothreonine occurs at positions 121 and 124. Residues 121–135 (TPDTPNSDSRSSTSN) show a composition bias toward low complexity. REM-1 domains are found at residues 121 to 203 (TPDT…TNEL) and 204 to 284 (AFDN…ELPR). A phosphoserine mark is found at serine 301, serine 305, serine 359, and serine 361. The interval 351–382 (TSVALPGWSPSDNRSSFMSRTSKSKSGSSRNL) is disordered. Residues 352-472 (SVALPGWSPS…LYLEPQGTLF (121 aa)) form the C2 domain. Residues 364–380 (RSSFMSRTSKSKSGSSR) show a composition bias toward low complexity. The tract at residues 381-462 (NLLKTDDLSN…FLDNQRHGMC (82 aa)) is necessary to rescue apical junction formation. 4 positions are modified to phosphoserine: serine 534, serine 582, serine 619, and serine 630. Residues 553–588 (LAPPASDSTVTKLDFDLEPEPPPAPPRASSLGETDE) are disordered. The Protein kinase domain occupies 656-915 (FRCCAVLGRG…AEDVKKHPFF (260 aa)). ATP is bound by residues 662–670 (LGRGHFGKV) and lysine 685. Residue aspartate 781 is the Proton acceptor of the active site. At threonine 815 the chain carries Phosphothreonine; by PDPK1. The segment at 916-976 (RLTDWSALMD…EEEQEMFHDF (61 aa)) is necessary for the catalytic activity. The AGC-kinase C-terminal domain occupies 916–983 (RLTDWSALMD…HDFDYVADWC (68 aa)). Serine 951 is modified (phosphoserine). Threonine 957 carries the post-translational modification Phosphothreonine. The tract at residues 977–983 (DYVADWC) is negatively regulates the responsiveness of the catalytic activity by cardiolipin and is required for optimal activation by the GTP-bound RhoA.

This sequence belongs to the protein kinase superfamily. AGC Ser/Thr protein kinase family. PKC subfamily. As to quaternary structure, interacts (via the REM repeats) with RHOA (GTP-bound form preferentially) and interacts (via the REM repeats) with RAC1 (GTP-bound form preferentially); the interactions induce its autophosphorylation. Interacts with NCK1 (via SH3 domains). Interacts with RHOC. Interacts with NCK1 and NCK2. Interacts with CD44. Interacts (via C-terminal kinase domain) with PDPK1; the interaction stimulates PDPK1 kinase activity. Interacts with MAP3K2; the interaction activates PRK2 kinase activity in a MAP3K2-independent kinase activity. Interacts (via C-terminal domain) with AKT1; the interaction occurs with the C-terminal cleavage product of PRK2 in apoptotic cells. Interacts (via C-terminus) with PTPN13 (via PDZ 3 domain). Interacts with CDK10. Post-translationally, phosphorylated during mitosis. Autophosphorylated. Phosphorylated. Phosphorylated by CDK10. In terms of processing, activated by limited proteolysis with trypsin. Proteolytically cleaved by caspase-3 during the induction of apoptotic cell death. In terms of tissue distribution, ubiquitous. Highly expressed in liver and lung Expressed in astrocytes (at protein level). Ubiquitous.

It is found in the cytoplasm. Its subcellular location is the nucleus. The protein resides in the membrane. It localises to the cell projection. The protein localises to the lamellipodium. It is found in the cytoskeleton. Its subcellular location is the cleavage furrow. The protein resides in the midbody. It localises to the cell junction. The enzyme catalyses L-seryl-[protein] + ATP = O-phospho-L-seryl-[protein] + ADP + H(+). It carries out the reaction L-threonyl-[protein] + ATP = O-phospho-L-threonyl-[protein] + ADP + H(+). Its activity is regulated as follows. Kinase activity is activated upon binding to GTP-bound Rho1/Rac1 GTPases. Activated by caspase-3 (CASP3) cleavage during apoptosis. Activated by lipids, particularly cardiolipin and to a lesser extent by other acidic phospholipids and unsaturated fatty acids. Two specific sites, Thr-815 (activation loop of the kinase domain) and Thr-957 (turn motif), need to be phosphorylated for its full activation. In terms of biological role, PKC-related serine/threonine-protein kinase and Rho/Rac effector protein that participates in specific signal transduction responses in the cell. Plays a role in the regulation of cell cycle progression, actin cytoskeleton assembly, cell migration, cell adhesion, tumor cell invasion and transcription activation signaling processes. Phosphorylates CTTN in hyaluronan-induced astrocytes and hence decreases CTTN ability to associate with filamentous actin. Phosphorylates HDAC5, therefore lead to impair HDAC5 import. Direct RhoA target required for the regulation of the maturation of primordial junctions into apical junction formation in bronchial epithelial cells. Required for G2/M phases of the cell cycle progression and abscission during cytokinesis in a ECT2-dependent manner. Stimulates FYN kinase activity that is required for establishment of skin cell-cell adhesion during keratinocytes differentiation. Regulates epithelial bladder cells speed and direction of movement during cell migration and tumor cell invasion. Inhibits Akt pro-survival-induced kinase activity. Mediates Rho protein-induced transcriptional activation via the c-fos serum response factor (SRF). Involved in the negative regulation of ciliogenesis. This Mus musculus (Mouse) protein is Serine/threonine-protein kinase N2 (Pkn2).